Reading from the N-terminus, the 468-residue chain is Cytochrome bd ubiquinol oxidase subunit 1 (468 aa).

9 consecutive transmembrane segments (helical) span residues T15–M35, A51–L71, L95–F115, I124–L144, L177–A197, L219–A239, F331–L351, I366–E386, and S416–I436. H18 is a heme b binding site. Residue H183 participates in heme b binding. Residue M334 participates in heme b binding. Positions H448–S468 are disordered.

This sequence belongs to the cytochrome ubiquinol oxidase subunit 1 family. As to quaternary structure, heterodimer of subunits I and II. Heme b is required as a cofactor. The cofactor is heme d cis-diol.

The protein localises to the cell membrane. It catalyses the reaction 2 a ubiquinol + O2(in) + 4 H(+)(in) = 2 a ubiquinone + 2 H2O(in) + 4 H(+)(out). In Bacillus subtilis (strain 168), this protein is Cytochrome bd ubiquinol oxidase subunit 1 (cydA).